Here is a 367-residue protein sequence, read N- to C-terminus: MRVDLFDFDLPPERIALRPVEPRDASRLLVVRPDSGDMTDHGMRELPDFLRAGDVLVVNDTRVIPARLHGFRSRGESRAKIEATLHKREGEALWRAFVKPAKKLRVGETICFARQEPGTEVESLEAEVLEKGAEGEVVLGFNRAGAALDAALDLLGEMPLPPYIAGKRAPDSQDSLDYQTLFANRSGAVAAPTASLHFTPRLIAAIEARGVTICKVTLHVGAGTFLPVKAEDTDAHRMHAEWGEVSAEVAAFLNKVHAAGGRIIAAGTTSLRLLESAVDEDGLIQPFQGETSIFMTPGFRFRAVDILLTNFHLPRSTLFMLVCAFAGLETMRRAYAHAIAASYRFYSYGDACLLFRATRNTSTGAAL.

This sequence belongs to the QueA family. In terms of assembly, monomer.

The protein resides in the cytoplasm. It catalyses the reaction 7-aminomethyl-7-carbaguanosine(34) in tRNA + S-adenosyl-L-methionine = epoxyqueuosine(34) in tRNA + adenine + L-methionine + 2 H(+). It functions in the pathway tRNA modification; tRNA-queuosine biosynthesis. In terms of biological role, transfers and isomerizes the ribose moiety from AdoMet to the 7-aminomethyl group of 7-deazaguanine (preQ1-tRNA) to give epoxyqueuosine (oQ-tRNA). The protein is S-adenosylmethionine:tRNA ribosyltransferase-isomerase of Beijerinckia indica subsp. indica (strain ATCC 9039 / DSM 1715 / NCIMB 8712).